The following is a 673-amino-acid chain: Ribonucleoprotein PTB-binding 2 (673 aa).

A compositionally biased stretch (gly residues) spans 1–17 (MAARGGGAGGAGSGSGP). The tract at residues 1–34 (MAARGGGAGGAGSGSGPSAGTAGEAAEPALRPGE) is disordered. Residues 18–29 (SAGTAGEAAEPA) show a composition bias toward low complexity. 3 consecutive RRM domains span residues 58–129 (RKIL…LQPT), 131–209 (ALLC…WMDV), and 220–298 (KCLC…FCAP). Positions 481 to 549 (QLPAGQAGPG…KGTEVASKNQ (69 aa)) are disordered. The span at 499–512 (SASVSISEASFSGS) shows a compositional bias: low complexity. Residues 529–549 (TGNQKTPQSQPKGTEVASKNQ) show a composition bias toward polar residues.

As to quaternary structure, interacts with PTBP1 and RAVER1. In terms of tissue distribution, expressed throughout embryogenesis. Detected at low levels in adult lung, brain and kidney, but not in the other tissues tested.

It is found in the nucleus. The protein resides in the cytoplasm. May bind single-stranded nucleic acids. This is Ribonucleoprotein PTB-binding 2 (Raver2) from Mus musculus (Mouse).